Consider the following 253-residue polypeptide: 3-deoxy-manno-octulosonate cytidylyltransferase (253 aa).

It belongs to the KdsB family.

Its subcellular location is the cytoplasm. The catalysed reaction is 3-deoxy-alpha-D-manno-oct-2-ulosonate + CTP = CMP-3-deoxy-beta-D-manno-octulosonate + diphosphate. Its pathway is nucleotide-sugar biosynthesis; CMP-3-deoxy-D-manno-octulosonate biosynthesis; CMP-3-deoxy-D-manno-octulosonate from 3-deoxy-D-manno-octulosonate and CTP: step 1/1. It participates in bacterial outer membrane biogenesis; lipopolysaccharide biosynthesis. In terms of biological role, activates KDO (a required 8-carbon sugar) for incorporation into bacterial lipopolysaccharide in Gram-negative bacteria. The polypeptide is 3-deoxy-manno-octulosonate cytidylyltransferase (Neisseria meningitidis serogroup C / serotype 2a (strain ATCC 700532 / DSM 15464 / FAM18)).